Consider the following 35-residue polypeptide: Photosystem II reaction center protein T (35 aa).

The chain crosses the membrane as a helical span at residues alanine 3–phenylalanine 23.

It belongs to the PsbT family. In terms of assembly, PSII is composed of 1 copy each of membrane proteins PsbA, PsbB, PsbC, PsbD, PsbE, PsbF, PsbH, PsbI, PsbJ, PsbK, PsbL, PsbM, PsbT, PsbY, PsbZ, Psb30/Ycf12, at least 3 peripheral proteins of the oxygen-evolving complex and a large number of cofactors. It forms dimeric complexes.

It is found in the plastid. The protein localises to the chloroplast thylakoid membrane. Found at the monomer-monomer interface of the photosystem II (PS II) dimer, plays a role in assembly and dimerization of PSII. PSII is a light-driven water plastoquinone oxidoreductase, using light energy to abstract electrons from H(2)O, generating a proton gradient subsequently used for ATP formation. The chain is Photosystem II reaction center protein T from Oenothera argillicola (Appalachian evening primrose).